A 194-amino-acid chain; its full sequence is RNA polymerase II subunit A C-terminal domain phosphatase SSU72 like protein 5 (194 aa).

It belongs to the SSU72 phosphatase family.

It localises to the nucleus. The catalysed reaction is O-phospho-L-seryl-[protein] + H2O = L-seryl-[protein] + phosphate. The enzyme catalyses O-phospho-L-threonyl-[protein] + H2O = L-threonyl-[protein] + phosphate. Protein phosphatase that catalyzes the dephosphorylation of the C-terminal domain of RNA polymerase II. Plays a role in RNA processing and termination. The polypeptide is RNA polymerase II subunit A C-terminal domain phosphatase SSU72 like protein 5 (Homo sapiens (Human)).